Reading from the N-terminus, the 189-residue chain is Ras-like protein 1 (189 aa).

GTP is bound at residue glycine 10–serine 17. The Effector region motif lies at tyrosine 32–tyrosine 40. Residues aspartate 57–glutamine 61 and asparagine 116–aspartate 119 each bind GTP. Residue cysteine 186 is modified to Cysteine methyl ester. Cysteine 186 carries S-geranylgeranyl cysteine lipidation. The propeptide at leucine 187–leucine 189 is removed in mature form.

The protein belongs to the small GTPase superfamily. Ras family.

Its subcellular location is the cell membrane. The catalysed reaction is GTP + H2O = GDP + phosphate + H(+). Functionally, ras proteins bind GDP/GTP and possess intrinsic GTPase activity. The sequence is that of Ras-like protein 1 (RAS1) from Physarum polycephalum (Slime mold).